The sequence spans 220 residues: MTATTETAPVAPPAEPAAAKKTKKQQPKKVAGGAKAKKPSGPSASELIVKAVSSSKERSGVSLAALKKALAAGGYDVDKNNSRLKLALKALVTKGTLTQVKGSGASGSFKLNKKQLETKDKAAKKKPAAPKAKKTAAGAKKAPKSPKKPKKVSAAAKSPKKVKKLAKAAKSPKKPKAVKAKKVAKSPAKKATKPKTAKSPAKAKVAKPKAAKAKKPAPKK.

2 disordered regions span residues 1-45 (MTAT…PSAS) and 99-220 (QVKG…APKK). Positions 28–45 (KKVAGGAKAKKPSGPSAS) are enriched in low complexity. In terms of domain architecture, H15 spans 40–113 (SGPSASELIV…GASGSFKLNK (74 aa)). Basic residues-rich tracts occupy residues 122–134 (AAKKKPAAPKAKK), 141–151 (KAPKSPKKPKK), 158–196 (SPKKVKKLAKAAKSPKKPKAVKAKKVAKSPAKKATKPKT), and 204–220 (KVAKPKAAKAKKPAPKK).

This sequence belongs to the histone H1/H5 family.

It localises to the nucleus. The protein resides in the chromosome. Functionally, histones H1 are necessary for the condensation of nucleosome chains into higher-order structures. The polypeptide is Histone H1B (Xenopus laevis (African clawed frog)).